The sequence spans 368 residues: Peptide chain release factor 2 (368 aa).

Glutamine 250 bears the N5-methylglutamine mark.

The protein belongs to the prokaryotic/mitochondrial release factor family. In terms of processing, methylated by PrmC. Methylation increases the termination efficiency of RF2.

The protein resides in the cytoplasm. In terms of biological role, peptide chain release factor 2 directs the termination of translation in response to the peptide chain termination codons UGA and UAA. This is Peptide chain release factor 2 from Rickettsia bellii (strain RML369-C).